Consider the following 652-residue polypeptide: DNA mismatch repair protein MutL (652 aa).

It belongs to the DNA mismatch repair MutL/HexB family.

This protein is involved in the repair of mismatches in DNA. It is required for dam-dependent methyl-directed DNA mismatch repair. May act as a 'molecular matchmaker', a protein that promotes the formation of a stable complex between two or more DNA-binding proteins in an ATP-dependent manner without itself being part of a final effector complex. The polypeptide is DNA mismatch repair protein MutL (Neorickettsia sennetsu (strain ATCC VR-367 / Miyayama) (Ehrlichia sennetsu)).